A 214-amino-acid polypeptide reads, in one-letter code: YINYKNMSHQHLLTLFNLLPVGANISTWWNFGSMLLSCLMIQIATGFFLAIHYTANINMAFSSIVHISRDVPYGWIMQNTHAIGASLFFICIYIHIARGIYYGSYLNKEVWLSGTTLLIILMATAFFGYVLPWGQMSFWAATVITNLLTAIPYLGTTLTTWLWGGFAINDPTLTRFFALHFILPFAIISLSSLHILLLHNEGSNNPLGTNSDID.

Transmembrane regions (helical) follow at residues 31-51 (FGSMLLSCLMIQIATGFFLAI), 75-96 (WIMQNTHAIGASLFFICIYIHI), 111-131 (WLSGTTLLIILMATAFFGYVL), and 176-196 (FFALHFILPFAIISLSSLHIL). Heme b contacts are provided by histidine 81 and histidine 95. Heme b-binding residues include histidine 180 and histidine 194. Histidine 199 contributes to the a ubiquinone binding site.

The protein belongs to the cytochrome b family. As to quaternary structure, the cytochrome bc1 complex contains 3 respiratory subunits (MT-CYB, CYC1 and UQCRFS1), 2 core proteins (UQCRC1 and UQCRC2) and probably 6 low-molecular weight proteins. It depends on heme b as a cofactor.

It is found in the mitochondrion inner membrane. Component of the ubiquinol-cytochrome c reductase complex (complex III or cytochrome b-c1 complex) that is part of the mitochondrial respiratory chain. The b-c1 complex mediates electron transfer from ubiquinol to cytochrome c. Contributes to the generation of a proton gradient across the mitochondrial membrane that is then used for ATP synthesis. This is Cytochrome b (MT-CYB) from Crotalus atrox (Western diamondback rattlesnake).